Consider the following 1259-residue polypeptide: Receptor tyrosine-protein kinase erbB-2 (1259 aa).

Positions 1–22 are cleaved as a signal peptide; that stretch reads MELAAWCRWGLLLALLPSGAAG. Topologically, residues 23–653 are extracellular; sequence TQVCTGTDMK…EQRASPVTSI (631 aa). The cysteines at positions 26 and 53 are disulfide-linked. Asn-68 is a glycosylation site (N-linked (GlcNAc...) asparagine). 13 disulfides stabilise this stretch: Cys-162–Cys-192, Cys-195–Cys-204, Cys-199–Cys-212, Cys-220–Cys-227, Cys-224–Cys-235, Cys-236–Cys-244, Cys-240–Cys-252, Cys-255–Cys-264, Cys-268–Cys-295, Cys-299–Cys-311, Cys-315–Cys-331, Cys-334–Cys-338, and Cys-342–Cys-367. A Phosphothreonine modification is found at Thr-182. The N-linked (GlcNAc...) asparagine glycan is linked to Asn-259. Asn-421 carries N-linked (GlcNAc...) asparagine glycosylation. 3 cysteine pairs are disulfide-bonded: Cys-475–Cys-504, Cys-511–Cys-519, and Cys-514–Cys-527. Asn-529 carries an N-linked (GlcNAc...) asparagine glycan. Intrachain disulfides connect Cys-530–Cys-539, Cys-543–Cys-559, Cys-562–Cys-575, Cys-566–Cys-583, Cys-586–Cys-595, Cys-599–Cys-622, Cys-625–Cys-633, and Cys-629–Cys-641. N-linked (GlcNAc...) asparagine glycosylation is present at Asn-570. Asn-628 carries an N-linked (GlcNAc...) asparagine glycan. The helical transmembrane segment at 654–674 threads the bilayer; that stretch reads IAAVVGILLAVVVGLVLGILI. Positions 675–688 are required for interaction with KPNB1 and EEA1; the sequence is KRRRQKIRKYTMRR. The Nuclear localization signal motif lies at 675–688; that stretch reads KRRRQKIRKYTMRR. Over 675 to 1259 the chain is Cytoplasmic; the sequence is KRRRQKIRKY…PEYLGLDVPV (585 aa). Residues 719 to 986 enclose the Protein kinase domain; it reads LRKVKVLGSG…RMARDPQRFV (268 aa). Residues 725-733 and Lys-752 each bind ATP; that span reads LGSGAFGTV. Asp-844 functions as the Proton acceptor in the catalytic mechanism. Tyr-876 carries the phosphotyrosine modification. Residues 1027 to 1183 are disordered; the sequence is QGFFCPEPTP…PKTLSPGKNG (157 aa). Phosphoserine is present on residues Ser-1077, Ser-1082, and Ser-1106. Phosphotyrosine is present on Tyr-1111. Phosphotyrosine; by autocatalysis is present on Tyr-1138. Over residues 1145–1160 the composition is skewed to pro residues; the sequence is WPQPPLALEGPLPPSR. At Thr-1165 the chain carries Phosphothreonine. Residues 1199-1201 form an interaction with PIK3C2B region; that stretch reads EYL. Tyr-1200 is modified (phosphotyrosine). The segment at 1203-1259 is disordered; that stretch reads PRGRAAPQPHPPPAFSPAFDNLYYWDQDPSERGSPPSTFEGTPTAENPEYLGLDVPV. Polar residues predominate over residues 1237 to 1247; that stretch reads PPSTFEGTPTA. Tyr-1252 bears the Phosphotyrosine; by autocatalysis mark.

The protein belongs to the protein kinase superfamily. Tyr protein kinase family. EGF receptor subfamily. In terms of assembly, homodimer. Heterodimer with EGFR, ERBB3 and ERBB4. Part of a complex with EGFR and either PIK3C2A or PIK3C2B. May interact with PIK3C2B when phosphorylated on Tyr-1200. Interacts with PRKCABP and PLXNB1. Interacts (when phosphorylated on Tyr-1252) with MEMO1. Interacts with MUC1. Interacts (when phosphorylated on Tyr-1138) with GRB7 (via SH2 domain). Interacts (when phosphorylated on Tyr-1252) with ERBIN. Interacts with SRC, KPNB1, PTK6, RANBP2, EEA1, CRM1, CLTC, RPA194, MYOC and ACTB. Interacts (preferentially with the tyrosine phosphorylated form) with CPNE3; this interaction occurs at the cell membrane and is increased in a growth factor heregulin-dependent manner. Interacts with HSP90AA1 and HSP90AB1 in an ATP-dependent manner; the interaction suppresses ERBB2 kinase activity. Interacts with SORL1; this interaction regulates ERBB2 subcellular distribution by promoting its recycling after internalization from endosomes back to the plasma membrane, hence stimulates ERBB2-mediated signaling. Interacts with SH3BGRL. Interacts with ROR1. Autophosphorylated. Autophosphorylation occurs in trans, i.e. one subunit of the dimeric receptor phosphorylates tyrosine residues on the other subunit. Ligand-binding increases phosphorylation on tyrosine residues. Signaling via SEMA4C promotes phosphorylation at Tyr-1252. Dephosphorylated by PTPN12.

It is found in the cell membrane. The protein resides in the cell projection. The protein localises to the ruffle membrane. It localises to the early endosome. Its subcellular location is the cytoplasm. It is found in the perinuclear region. The protein resides in the nucleus. It carries out the reaction L-tyrosyl-[protein] + ATP = O-phospho-L-tyrosyl-[protein] + ADP + H(+). Functionally, protein tyrosine kinase that is part of several cell surface receptor complexes, but that apparently needs a coreceptor for ligand binding. Essential component of a neuregulin-receptor complex, although neuregulins do not interact with it alone. GP30 is a potential ligand for this receptor. Regulates outgrowth and stabilization of peripheral microtubules (MTs). Upon ERBB2 activation, the MEMO1-RHOA-DIAPH1 signaling pathway elicits the phosphorylation and thus the inhibition of GSK3B at cell membrane. This prevents the phosphorylation of APC and CLASP2, allowing its association with the cell membrane. In turn, membrane-bound APC allows the localization of MACF1 to the cell membrane, which is required for microtubule capture and stabilization. In the nucleus is involved in transcriptional regulation. Associates with the 5'-TCAAATTC-3' sequence in the PTGS2/COX-2 promoter and activates its transcription. Implicated in transcriptional activation of CDKN1A; the function involves STAT3 and SRC. Involved in the transcription of rRNA genes by RNA Pol I and enhances protein synthesis and cell growth. This chain is Receptor tyrosine-protein kinase erbB-2 (ERBB2), found in Canis lupus familiaris (Dog).